Here is a 151-residue protein sequence, read N- to C-terminus: CNSDIVIRAKVVGKKLVKEGPFGTMVYTVKQMKMYRGFTKMPHVQYIHTEASESLCGLKLEVNKYQYLLTGRVYDGKVYTGLCNFVERWDQLTLSQRKGLNYRYHLGCNCKIKSCYYLPCFVTSKNECLWTDMLSNFGYPGYQSKHYACIR.

The 108-residue stretch at 1–108 (CNSDIVIRAK…GLNYRYHLGC (108 aa)) folds into the NTR domain. Intrachain disulfides connect Cys-1–Cys-108, Cys-115–Cys-120, and Cys-128–Cys-149. Positions 53–54 (ES) are involved in metalloproteinase-binding. Positions 71–151 (GRVYDGKVYT…YQSKHYACIR (81 aa)) are mediates interaction with EFEMP1.

The protein belongs to the protease inhibitor I35 (TIMP) family. As to quaternary structure, interacts with EFEMP1.

The protein resides in the secreted. It localises to the extracellular space. Its subcellular location is the extracellular matrix. Its function is as follows. Complexes with metalloproteinases (such as collagenases) and irreversibly inactivates them by binding to their catalytic zinc cofactor. May form part of a tissue-specific acute response to remodeling stimuli. This chain is Metalloproteinase inhibitor 3 (TIMP3), found in Oryctolagus cuniculus (Rabbit).